Reading from the N-terminus, the 291-residue chain is 2-C-methyl-D-erythritol 4-phosphate cytidylyltransferase (291 aa).

A disordered region spans residues 1-23 (MTERDFDTPVETPTVQPAPAQGT).

This sequence belongs to the IspD/TarI cytidylyltransferase family. IspD subfamily.

It catalyses the reaction 2-C-methyl-D-erythritol 4-phosphate + CTP + H(+) = 4-CDP-2-C-methyl-D-erythritol + diphosphate. It functions in the pathway isoprenoid biosynthesis; isopentenyl diphosphate biosynthesis via DXP pathway; isopentenyl diphosphate from 1-deoxy-D-xylulose 5-phosphate: step 2/6. In terms of biological role, catalyzes the formation of 4-diphosphocytidyl-2-C-methyl-D-erythritol from CTP and 2-C-methyl-D-erythritol 4-phosphate (MEP). The protein is 2-C-methyl-D-erythritol 4-phosphate cytidylyltransferase of Bifidobacterium longum subsp. infantis (strain ATCC 15697 / DSM 20088 / JCM 1222 / NCTC 11817 / S12).